We begin with the raw amino-acid sequence, 333 residues long: Holliday junction branch migration complex subunit RuvB (333 aa).

Residues 1–182 form a large ATPase domain (RuvB-L) region; that stretch reads MDERLLSGES…FGVLSRLEYY (182 aa). ATP is bound by residues leucine 21, arginine 22, glycine 63, lysine 66, threonine 67, threonine 68, 129-131, arginine 172, tyrosine 182, and arginine 219; that span reads EDF. Threonine 67 provides a ligand contact to Mg(2+). Positions 183–253 are small ATPAse domain (RuvB-S); sequence TVDQLSAIVE…ITQMALELLQ (71 aa). The tract at residues 256 to 333 is head domain (RuvB-H); it reads KLGLDHIDHK…EHFGMEIPKV (78 aa). 2 residues coordinate DNA: arginine 311 and arginine 316.

It belongs to the RuvB family. As to quaternary structure, homohexamer. Forms an RuvA(8)-RuvB(12)-Holliday junction (HJ) complex. HJ DNA is sandwiched between 2 RuvA tetramers; dsDNA enters through RuvA and exits via RuvB. An RuvB hexamer assembles on each DNA strand where it exits the tetramer. Each RuvB hexamer is contacted by two RuvA subunits (via domain III) on 2 adjacent RuvB subunits; this complex drives branch migration. In the full resolvosome a probable DNA-RuvA(4)-RuvB(12)-RuvC(2) complex forms which resolves the HJ.

Its subcellular location is the cytoplasm. The catalysed reaction is ATP + H2O = ADP + phosphate + H(+). In terms of biological role, the RuvA-RuvB-RuvC complex processes Holliday junction (HJ) DNA during genetic recombination and DNA repair, while the RuvA-RuvB complex plays an important role in the rescue of blocked DNA replication forks via replication fork reversal (RFR). RuvA specifically binds to HJ cruciform DNA, conferring on it an open structure. The RuvB hexamer acts as an ATP-dependent pump, pulling dsDNA into and through the RuvAB complex. RuvB forms 2 homohexamers on either side of HJ DNA bound by 1 or 2 RuvA tetramers; 4 subunits per hexamer contact DNA at a time. Coordinated motions by a converter formed by DNA-disengaged RuvB subunits stimulates ATP hydrolysis and nucleotide exchange. Immobilization of the converter enables RuvB to convert the ATP-contained energy into a lever motion, pulling 2 nucleotides of DNA out of the RuvA tetramer per ATP hydrolyzed, thus driving DNA branch migration. The RuvB motors rotate together with the DNA substrate, which together with the progressing nucleotide cycle form the mechanistic basis for DNA recombination by continuous HJ branch migration. Branch migration allows RuvC to scan DNA until it finds its consensus sequence, where it cleaves and resolves cruciform DNA. The sequence is that of Holliday junction branch migration complex subunit RuvB from Bacillus cereus (strain B4264).